A 312-amino-acid chain; its full sequence is Olfactory receptor 5J2 (312 aa).

The Extracellular segment spans residues 1–25; the sequence is MADDNFTVVTEFILLGLTDHAELKA. N5 is a glycosylation site (N-linked (GlcNAc...) asparagine). Residues 26 to 46 form a helical membrane-spanning segment; the sequence is VLFVVFLVIYAITLLRNLGMI. At 47–54 the chain is on the cytoplasmic side; sequence LLIQITSK. A helical transmembrane segment spans residues 55–75; the sequence is LHTPMYFLLSCLSFVDACYSS. At 76-99 the chain is on the extracellular side; sequence AIAPKMLVNLLVVKATISFSACMV. C97 and C189 are joined by a disulfide. Residues 100–120 traverse the membrane as a helical segment; it reads QHLCFGVFITTEGFLLSVMAY. Residues 121 to 139 lie on the Cytoplasmic side of the membrane; the sequence is DRYVAIVSPLLYTVAMSDR. Residues 140-160 traverse the membrane as a helical segment; the sequence is KCVELVTGSWIGGIVNTLIHT. Residues 161–196 are Extracellular-facing; the sequence is ISLRRLSFCRLNAVSHFFCDIPSLLKLSCSDTSMNE. The helical transmembrane segment at 197 to 217 threads the bilayer; the sequence is LLLLTFSGVIAMATFLTVIIS. Residues 218–237 are Cytoplasmic-facing; sequence YIFIAFASLRIHSASGRQQA. The chain crosses the membrane as a helical span at residues 238–258; it reads FSTCASHLTAVTIFYGTLIFS. Over 259 to 271 the chain is Extracellular; that stretch reads YIQPSSQYFVEQE. Residues 272 to 292 form a helical membrane-spanning segment; that stretch reads KVVSMFYTLGIPMLNLLIHSL. Over 293 to 312 the chain is Cytoplasmic; the sequence is RNKDVKEAVKRAIEMKHFLC.

The protein belongs to the G-protein coupled receptor 1 family.

Its subcellular location is the cell membrane. Odorant receptor. The chain is Olfactory receptor 5J2 (OR5J2) from Homo sapiens (Human).